We begin with the raw amino-acid sequence, 210 residues long: Homeobox protein Rhox5 (210 aa).

Residues 29–117 (KAEAFLQAGE…KNGKPEDRQM (89 aa)) form a disordered region. The homeobox; atypical DNA-binding region spans 117-175 (MPLQGSRFAQQRLSELQSILQRTNSFDVPREDLYRLMDTCVARVQNWFKIRRAAARRNR).

The protein resides in the nucleus. Its function is as follows. Transcription factor required for differentiation of embryonic stem cells (ESCs) into primordial germ cells. The polypeptide is Homeobox protein Rhox5 (Rhox5) (Mus minutoides (Southern African pygmy mouse)).